A 692-amino-acid polypeptide reads, in one-letter code: MARQVSLEMTRNIGIMAHIDAGKTTTTERILYYTGVSHKIGEVHDGAATMDWMEQEQERGITITSAATTCNWRDHRINIIDTPGHVDFTIEVERSLRVLDGAVAVFCSVGGVEPQSETVWRQADKYRVPRIAFINKMDRVGADFFRGIAMIKDRLKANPVPLQIPIGSEENYKGLVDLIEMKGIVFNDESMGATFDTIEIPADLLEQAQEYREALIEEVSSHDDVLMEKYLGGEEISNAELKAAIRQATLDIKICPVICGSAFKNKGVQHLLDAVLDYMPAPTDIPAIQGVDANTDAPIERHASDSEPFAALGFKIMTDPFVGQLCFFRVYSGVIQSGSYVYNATKGKRERIGRILKMHANKREEIKEVYAGDIAAAVGLKYTTTGDTLCAEDHAVILESIEFPEPVISIAIEPKTKADQEKLGLSLGKLASEDPSFRVKTDEETGQTIISGMGELHLEIIVDRLFREFKVEANVGKPQVAYRETITKKVKAEGKFVRQSGGRGQFGHVWLEVEPQEAGKGYEFVDAIKGGVVPREYIPAVDKGIKEALDNGVMAGFPVVDIKVTLVDGSYHEVDSSEMAFKIAGSMGFKEGCQKASPIILEPIMSVEVVVPEEYMGDVIGDLNSRRGRIMGMEGRAGAQVVASMVPLAQMFGYSTDLRSATQGRATYSMTFDHYEPVPKSVAEEIVAKVKG.

The tr-type G domain maps to 8 to 283 (EMTRNIGIMA…AVLDYMPAPT (276 aa)). Residues 17–24 (AHIDAGKT), 81–85 (DTPGH), and 135–138 (NKMD) each bind GTP.

The protein belongs to the TRAFAC class translation factor GTPase superfamily. Classic translation factor GTPase family. EF-G/EF-2 subfamily.

It localises to the cytoplasm. Its function is as follows. Catalyzes the GTP-dependent ribosomal translocation step during translation elongation. During this step, the ribosome changes from the pre-translocational (PRE) to the post-translocational (POST) state as the newly formed A-site-bound peptidyl-tRNA and P-site-bound deacylated tRNA move to the P and E sites, respectively. Catalyzes the coordinated movement of the two tRNA molecules, the mRNA and conformational changes in the ribosome. This chain is Elongation factor G, found in Citrifermentans bemidjiense (strain ATCC BAA-1014 / DSM 16622 / JCM 12645 / Bem) (Geobacter bemidjiensis).